Reading from the N-terminus, the 360-residue chain is Protein Wnt-2 (360 aa).

A signal peptide spans 1 to 25 (MNAPLGGIWLWLPLLLTWLTPEVNS). Disulfide bonds link C76–C87, C127–C135, C137–C157, C206–C220, C208–C215, C278–C309, C294–C304, C308–C348, C324–C339, C326–C336, and C331–C332. The O-palmitoleoyl serine; by PORCN moiety is linked to residue S212. Residue N295 is glycosylated (N-linked (GlcNAc...) asparagine).

This sequence belongs to the Wnt family. In terms of processing, palmitoleoylation is required for efficient binding to frizzled receptors. Depalmitoleoylation leads to Wnt signaling pathway inhibition.

It is found in the secreted. Its subcellular location is the extracellular space. It localises to the extracellular matrix. Its function is as follows. Ligand for members of the frizzled family of seven transmembrane receptors. Functions in the canonical Wnt signaling pathway that results in activation of transcription factors of the TCF/LEF family. Functions as a upstream regulator of FGF10 expression. Plays an important role in embryonic lung development. May contribute to embryonic brain development by regulating the proliferation of dopaminergic precursors and neurons. The sequence is that of Protein Wnt-2 (WNT2) from Nomascus leucogenys (Northern white-cheeked gibbon).